The following is a 73-amino-acid chain: Small proline-rich protein 2G (73 aa).

A compositionally biased stretch (low complexity) spans 1–11 (MSYQQQQCKQP). The tract at residues 1–20 (MSYQQQQCKQPCQPPPVCPT) is disordered. Repeat copies occupy residues 21-29 (PKCPEPCPP), 30-38 (PKCPEPYLP), and 39-47 (PPCPPEHCP). The interval 21 to 47 (PKCPEPCPPPKCPEPYLPPPCPPEHCP) is 3 X 9 AA approximate tandem repeats.

The protein belongs to the cornifin (SPRR) family.

The protein localises to the cytoplasm. In terms of biological role, cross-linked envelope protein of keratinocytes. It is a keratinocyte protein that first appears in the cell cytosol, but ultimately becomes cross-linked to membrane proteins by transglutaminase. All that results in the formation of an insoluble envelope beneath the plasma membrane. In Homo sapiens (Human), this protein is Small proline-rich protein 2G (SPRR2G).